Here is a 242-residue protein sequence, read N- to C-terminus: Venom nerve growth factor 2 (242 aa).

The N-terminal stretch at 1 to 18 is a signal peptide; sequence MSMLCYTLIIAFLIGIWA. A propeptide spanning residues 19–125 is cleaved from the precursor; sequence APQSEDNVPL…ALNRNIQAKR (107 aa). Basic and acidic residues predominate over residues 47 to 66; that stretch reads DLKTSRNTDQRHPAPKKADD. The disordered stretch occupies residues 47–70; that stretch reads DLKTSRNTDQRHPAPKKADDQELG. Cystine bridges form between Cys-139-Cys-203, Cys-181-Cys-231, and Cys-191-Cys-233.

The protein belongs to the NGF-beta family. In terms of assembly, homodimer; non-covalently linked. Expressed by the venom gland.

The protein resides in the secreted. Its function is as follows. Nerve growth factor is important for the development and maintenance of the sympathetic and sensory nervous systems. It stimulates division and differentiation of sympathetic and embryonic sensory neurons as well as basal forebrain cholinergic neurons in the brain. Its relevance in the snake venom is not clear. However, it has been shown to inhibit metalloproteinase-dependent proteolysis of platelet glycoprotein Ib alpha, suggesting a metalloproteinase inhibition to prevent metalloprotease autodigestion and/or protection against prey proteases. Binds a lipid between the two protein chains in the homodimer. The lipid-bound form promotes histamine relase from mouse mast cells, contrary to the lipid-free form. This Pseudechis australis (Mulga snake) protein is Venom nerve growth factor 2.